The primary structure comprises 746 residues: MGSHSTGLEETLGVLPSWLFCKMLRFLKRPLVVTVDINLNLVALTGLGLLTRLWQLSYPRAVVFDEVYYGQYISFYMKRIFFLDDSGPPFGHMLLALGGWLGGFDGNFLWNRIGAEYSSNVPIWSLRLLPALAGALSVPMAYQIVLELHFSHGAAIGAALLMLIENALITQSRLMLLESILIFFNLLAVLSYLKFFNSQTHSPFSVHWWLWLLLTGVSCSCAVGIKYMGIFTYLLVLGIAAVHAWNLIGDQTLSNMRVLSHLLARIVALLVVPVFLYLLFFYVHLMLLYRSGPHDQIMSSAFQASLEGGLARITQGQPLEVAFGSQVTLKSVSGKPLPCWLHSHKNTYPMIYENGRGSSHQQQVTCYPFKDINNWWIVKDPGRHQLVVNNPPRPVRHGDIVQLVHGMTTRLLNTHDVAAPLSPHSQEVSCYIDYNISMPAQNLWKLDIVNRESNRDTWKTILSEVRFVHVNTSAILKLSGAHLPDWGFRQLEVVGEKLSPGYHESMVWNVEEHRYGKSHEQKERELELHSPTQLDISRNLSFMARFSELQWKMLTLKNEDLEHQYSSTPLEWLTLDTNIAYWLHPRTSAQIHLLGNIVIWTSASLATVVYTLLFFWYLLRRRRSICDLPEDAWSRWVLAGALCTGGWALNYLPFFLMERVLFLYHYLPALTFQILLLPIVLQHASDHLCRSQLQRNVFSALVVAWYSSACHVSNMLRPLTYGDTSLSPGELRALRWKDSWDILIRK.

The next 7 helical transmembrane spans lie at 30–50 (PLVV…LGLL), 90–110 (FGHM…NFLW), 121–141 (VPIW…VPMA), 144–164 (IVLE…LMLI), 176–196 (LLES…LKFF), 228–248 (MGIF…WNLI), and 266–286 (IVAL…VHLM). 3 MIR domains span residues 318 to 381 (PLEV…VKDP), 392 to 449 (PRPV…LDIV), and 453 to 513 (SNRD…VEEH). Asn-435, Asn-471, and Asn-539 each carry an N-linked (GlcNAc...) asparagine glycan. Transmembrane regions (helical) follow at residues 597–617 (IVIW…FFWY), 636–656 (WVLA…PFFL), and 660–680 (VLFL…LPIV).

Belongs to the glycosyltransferase 39 family.

Its subcellular location is the endoplasmic reticulum membrane. It catalyses the reaction a di-trans,poly-cis-dolichyl beta-D-mannosyl phosphate + L-seryl-[protein] = 3-O-(alpha-D-mannosyl)-L-seryl-[protein] + a di-trans,poly-cis-dolichyl phosphate + H(+). The catalysed reaction is a di-trans,poly-cis-dolichyl beta-D-mannosyl phosphate + L-threonyl-[protein] = 3-O-(alpha-D-mannosyl)-L-threonyl-[protein] + a di-trans,poly-cis-dolichyl phosphate + H(+). Its pathway is protein modification; protein glycosylation. In terms of biological role, transfers mannosyl residues to the hydroxyl group of serine or threonine residues. Coexpression of both POMT1 and POMT2 is necessary for enzyme activity, expression of either POMT1 or POMT2 alone is insufficient. Essentially dedicated to O-mannosylation of alpha-DAG1 and few other proteins but not of cadherins and protocaherins. This is Protein O-mannosyl-transferase 1 (Pomt1) from Mus musculus (Mouse).